Here is a 255-residue protein sequence, read N- to C-terminus: uncharacterized protein (255 aa).

The protein belongs to the methyltransferase superfamily.

This is an uncharacterized protein from Bacillus subtilis (strain 168).